A 442-amino-acid polypeptide reads, in one-letter code: Metacaspase-5 (442 aa).

A signal peptide spans 1-18; the sequence is MDLLLGVLSSGILQNALP. Residues 19 to 62 form an important for catalytic activity region; that stretch reads FVAGVGRVKRPKRVKLEEAFREAHLCRPVIPYRAPTPYTGGRVK. Asn-69 and Asn-112 each carry an N-linked (GlcNAc...) asparagine glycan. His-146 is an active-site residue. Ca(2+)-binding residues include Asp-161, Asp-177, and Asp-178. Cys-201 is a catalytic residue. Asp-208 serves as a coordination point for Ca(2+). Asn-234, Asn-257, Asn-282, and Asn-331 each carry an N-linked (GlcNAc...) asparagine glycan. Residues 336–442 form a negatively regulates catalytic activity region; sequence HYVPQQYLQP…QYLSGVGKPL (107 aa). Residues 348 to 371 show a composition bias toward pro residues; that stretch reads PPQPYYPPPQPQQPYYPPPQPQQP. The interval 348-442 is disordered; it reads PPQPYYPPPQ…QYLSGVGKPL (95 aa). Low complexity predominate over residues 372–382; that stretch reads YYPSSQLPTQY. Over residues 422-434 the composition is skewed to polar residues; that stretch reads PSDQSTYYSSAQY.

The protein belongs to the peptidase C14B family. In terms of processing, in epimastigotes, the unprocessed enzyme appears to be the main form. Auto-processing is dispensable for catalytic activity towards small oligopeptide substrates.

The protein localises to the recycling endosome. Activated by Ca(2+). Its function is as follows. Cysteine protease that cleaves specifically after arginine or lysine residues. May play a role in apoptosis. The sequence is that of Metacaspase-5 from Trypanosoma cruzi (strain CL Brener).